The sequence spans 142 residues: Large ribosomal subunit protein uL29 (142 aa).

Belongs to the universal ribosomal protein uL29 family.

The polypeptide is Large ribosomal subunit protein uL29 (RPL35) (Theileria annulata).